The sequence spans 706 residues: Gamma-adducin (706 aa).

A compositionally biased stretch (low complexity) spans Met-1–Thr-11. Residues Met-1–Arg-23 form a disordered region. Position 2 is an N-acetylserine (Ser-2). 8 positions are modified to phosphoserine: Ser-31, Ser-42, Ser-64, Ser-402, Ser-414, Ser-423, Ser-442, and Ser-461. Disordered stretches follow at residues Ala-471 to Asn-495, Pro-534 to His-556, Gln-574 to Glu-610, and Thr-651 to Ala-706. A Glycyl lysine isopeptide (Lys-Gly) (interchain with G-Cter in SUMO2) cross-link involves residue Lys-484. Phosphoserine occurs at positions 583, 585, and 590. 2 stretches are compositionally biased toward low complexity: residues Ser-590 to Pro-605 and Thr-651 to Ile-662. Phosphoserine is present on residues Ser-673, Ser-677, Ser-679, Ser-681, and Ser-683. Positions Pro-682–Ala-706 are enriched in basic residues. Residues Lys-684–Lys-701 form an interaction with calmodulin region.

This sequence belongs to the aldolase class II family. Adducin subfamily. In terms of assembly, heterodimer of an alpha and a gamma subunit. Sumoylated. In terms of processing, proteolytically cleaved by asparagine endopeptidase (AEP) into 2 fragments. Overexpression of the 1-357 fragment induces neuronal apoptosis, and overexpression of either 1-357 or 358-706 fragment increases the degeneration of dendritic spines. Overexpression of the 1-357 fragment impairs neurite outgrowth by downregulating the expression of Rac2, and induces synaptic dysfunction and cognitive impairments in tau P301S transgenic mice, a mouse model for Alzheimer disease (AD). As to expression, cleavage fragment 1-357 is expressed in the brain and the expression increases with age (at protein level). The fragment is expressed in the cortex, hippocampal CA1 region and hippocampal dentate gyrus in tau P301S transgenic mice, a mouse model for Alzheimer disease (AD) (at protein level). The fragment is only weakly expressed in non-transgenic mouse brain sections (at protein level).

The protein resides in the cytoplasm. It localises to the cytoskeleton. Its subcellular location is the cell membrane. Its function is as follows. Membrane-cytoskeleton-associated protein that promotes the assembly of the spectrin-actin network. Plays a role in actin filament capping. Binds to calmodulin. Involved in myogenic reactivity of the renal afferent arteriole (Af-art), renal interlobular arteries and middle cerebral artery (MCA) to increased perfusion pressure. Involved in regulation of potassium channels in the vascular smooth muscle cells (VSMCs) of the Af-art and MCA ex vivo. Involved in regulation of glomerular capillary pressure, glomerular filtration rate (GFR) and glomerular nephrin expression in response to hypertension. Involved in renal blood flow (RBF) autoregulation. Plays a role in podocyte structure and function. Regulates globular monomer actin (G-actin) and filamentous polymer actin (F-actin) ratios in the primary podocytes affecting actin cytoskeleton organization. Regulates expression of synaptopodin, RhoA, Rac1 and CDC42 in the renal cortex and the primary podocytes. Regulates expression of nephrin in the glomeruli and in the primary podocytes, expression of nephrin and podocinin in the renal cortex, and expression of focal adhesion proteins integrin alpha-3 and integrin beta-1 in the glomeruli. Involved in cell migration and cell adhesion of podocytes, and in podocyte foot process effacement. Regulates expression of profibrotics markers MMP2, MMP9, TGF beta-1, tubular tight junction protein E-cadherin, and mesenchymal markers vimentin and alpha-SMA. Promotes the growth of neurites. This Mus musculus (Mouse) protein is Gamma-adducin (Add3).